Reading from the N-terminus, the 410-residue chain is DNA replication and repair protein RecF (410 aa).

Residue 30-37 participates in ATP binding; that stretch reads GPNGHGKT.

The protein belongs to the RecF family.

The protein resides in the cytoplasm. Functionally, the RecF protein is involved in DNA metabolism; it is required for DNA replication and normal SOS inducibility. RecF binds preferentially to single-stranded, linear DNA. It also seems to bind ATP. In Rhodococcus opacus (strain B4), this protein is DNA replication and repair protein RecF.